Reading from the N-terminus, the 350-residue chain is tRNA uridine(34) hydroxylase (350 aa).

A Rhodanese domain is found at 146–240; sequence DDPDAVFIDM…YARRARAQGL (95 aa). Catalysis depends on Cys-200, which acts as the Cysteine persulfide intermediate. Basic and acidic residues predominate over residues 319 to 328; that stretch reads RRRRAGRENG. The interval 319–350 is disordered; it reads RRRRAGRENGNKIFNKSRGRLNSKLSIPDPAE.

It belongs to the TrhO family.

The catalysed reaction is uridine(34) in tRNA + AH2 + O2 = 5-hydroxyuridine(34) in tRNA + A + H2O. Catalyzes oxygen-dependent 5-hydroxyuridine (ho5U) modification at position 34 in tRNAs. This chain is tRNA uridine(34) hydroxylase, found in Salmonella typhimurium (strain LT2 / SGSC1412 / ATCC 700720).